The primary structure comprises 366 residues: Chorismate synthase (366 aa).

The NADP(+) site is built by Arg48 and Arg54. Residues 125 to 127 (RSS), 238 to 239 (NA), Gly278, 293 to 297 (KPTSS), and Arg319 contribute to the FMN site.

This sequence belongs to the chorismate synthase family. As to quaternary structure, homotetramer. Requires FMNH2 as cofactor.

The catalysed reaction is 5-O-(1-carboxyvinyl)-3-phosphoshikimate = chorismate + phosphate. Its pathway is metabolic intermediate biosynthesis; chorismate biosynthesis; chorismate from D-erythrose 4-phosphate and phosphoenolpyruvate: step 7/7. In terms of biological role, catalyzes the anti-1,4-elimination of the C-3 phosphate and the C-6 proR hydrogen from 5-enolpyruvylshikimate-3-phosphate (EPSP) to yield chorismate, which is the branch point compound that serves as the starting substrate for the three terminal pathways of aromatic amino acid biosynthesis. This reaction introduces a second double bond into the aromatic ring system. In Thiobacillus denitrificans (strain ATCC 25259 / T1), this protein is Chorismate synthase.